Here is a 183-residue protein sequence, read N- to C-terminus: MGADASAFSFRTKTMSHPNLPMTEVLVVADCWQREPDSEAVIQRAVAAAAESVDEDVAEAEVAVMLTDDAGIRTLNSNWRGIDKPTNVLSFPALQPEGEWKEGDAPRMLGDIAIAYETMRREADEEKKPFDHHLSHLAVHGFLHLIGYDHENDDDAEEMEALETQILAHLGIPDPYADRPGTH.

Positions 140, 144, and 150 each coordinate Zn(2+).

Belongs to the endoribonuclease YbeY family. Zn(2+) serves as cofactor.

It is found in the cytoplasm. Single strand-specific metallo-endoribonuclease involved in late-stage 70S ribosome quality control and in maturation of the 3' terminus of the 16S rRNA. This Bradyrhizobium diazoefficiens (strain JCM 10833 / BCRC 13528 / IAM 13628 / NBRC 14792 / USDA 110) protein is Endoribonuclease YbeY.